A 210-amino-acid chain; its full sequence is Casparian strip membrane protein 1 (210 aa).

A disordered region spans residues 1 to 25 (MEKSEATTIDVAETSRESKGKAPLL). Residues 1–48 (MEKSEATTIDVAETSRESKGKAPLLRDPPAWVPAAVERQRAAPAYKRG) lie on the Cytoplasmic side of the membrane. Residues 49-69 (VAIFDLILRISAATAALAATI) form a helical membrane-spanning segment. Residues 70-98 (TMGTTEQTLPFFTQFFQFQASYDDLPTFT) are Extracellular-facing. The chain crosses the membrane as a helical span at residues 99 to 119 (FFVIAMSIVTGYLVLSVPFSI). Topologically, residues 120–138 (VCIARPVAAAPRLLLILCD) are cytoplasmic. The chain crosses the membrane as a helical span at residues 139–159 (TLAVTLNTSAAGASAAIVYLA). At 160–183 (HNGNSDANWLAICQQFNDFCQRTS) the chain is on the extracellular side. The helical transmembrane segment at 184 to 204 (GAVVASFVAVVLLIFLVVLSA) threads the bilayer. Topologically, residues 205-210 (SALKKH) are cytoplasmic.

Belongs to the Casparian strip membrane proteins (CASP) family. In terms of assembly, homodimer and heterodimers.

The protein localises to the cell membrane. Regulates membrane-cell wall junctions and localized cell wall deposition. Required for establishment of the Casparian strip membrane domain (CSD) and the subsequent formation of Casparian strips, a cell wall modification of the root endodermis that determines an apoplastic barrier between the intraorganismal apoplasm and the extraorganismal apoplasm and prevents lateral diffusion. The chain is Casparian strip membrane protein 1 from Erythranthe guttata (Yellow monkey flower).